A 366-amino-acid polypeptide reads, in one-letter code: Aminomethyltransferase (366 aa).

The protein belongs to the GcvT family. In terms of assembly, the glycine cleavage system is composed of four proteins: P, T, L and H.

It catalyses the reaction N(6)-[(R)-S(8)-aminomethyldihydrolipoyl]-L-lysyl-[protein] + (6S)-5,6,7,8-tetrahydrofolate = N(6)-[(R)-dihydrolipoyl]-L-lysyl-[protein] + (6R)-5,10-methylene-5,6,7,8-tetrahydrofolate + NH4(+). Its function is as follows. The glycine cleavage system catalyzes the degradation of glycine. This is Aminomethyltransferase from Bacillus cereus (strain ATCC 10987 / NRS 248).